We begin with the raw amino-acid sequence, 216 residues long: UPF0134 protein MPN_344 (216 aa).

The span at phenylalanine 47–glutamate 62 shows a compositional bias: basic and acidic residues. Disordered stretches follow at residues phenylalanine 47–aspartate 104 and glycine 194–lysine 216. The segment covering isoleucine 68–proline 78 has biased composition (pro residues). Over residues glutamate 83–proline 93 the composition is skewed to low complexity.

It belongs to the UPF0134 family.

This is UPF0134 protein MPN_344 from Mycoplasma pneumoniae (strain ATCC 29342 / M129 / Subtype 1) (Mycoplasmoides pneumoniae).